Reading from the N-terminus, the 135-residue chain is ATP synthase epsilon chain (135 aa).

This sequence belongs to the ATPase epsilon chain family. As to quaternary structure, F-type ATPases have 2 components, CF(1) - the catalytic core - and CF(0) - the membrane proton channel. CF(1) has five subunits: alpha(3), beta(3), gamma(1), delta(1), epsilon(1). CF(0) has three main subunits: a, b and c.

It localises to the cell inner membrane. Its function is as follows. Produces ATP from ADP in the presence of a proton gradient across the membrane. This is ATP synthase epsilon chain from Rhodopseudomonas palustris (strain BisB18).